The primary structure comprises 466 residues: Asparagine--tRNA ligase (466 aa).

This sequence belongs to the class-II aminoacyl-tRNA synthetase family. In terms of assembly, homodimer.

Its subcellular location is the cytoplasm. It catalyses the reaction tRNA(Asn) + L-asparagine + ATP = L-asparaginyl-tRNA(Asn) + AMP + diphosphate + H(+). The protein is Asparagine--tRNA ligase of Shewanella baltica (strain OS155 / ATCC BAA-1091).